We begin with the raw amino-acid sequence, 345 residues long: Dihydroorotase (345 aa).

Zn(2+) contacts are provided by His-13 and His-15. Residues 15–17 (HLR) and Asn-41 each bind substrate. The Zn(2+) site is built by Lys-99, His-136, His-174, and Asp-247. Lys-99 is subject to N6-carboxylysine. His-136 provides a ligand contact to substrate. Asp-247 is an active-site residue. His-251 and Ala-263 together coordinate substrate.

It belongs to the metallo-dependent hydrolases superfamily. DHOase family. Class II DHOase subfamily. Homodimer. The cofactor is Zn(2+).

It catalyses the reaction (S)-dihydroorotate + H2O = N-carbamoyl-L-aspartate + H(+). Its pathway is pyrimidine metabolism; UMP biosynthesis via de novo pathway; (S)-dihydroorotate from bicarbonate: step 3/3. Functionally, catalyzes the reversible cyclization of carbamoyl aspartate to dihydroorotate. The sequence is that of Dihydroorotase from Halorhodospira halophila (strain DSM 244 / SL1) (Ectothiorhodospira halophila (strain DSM 244 / SL1)).